Consider the following 181-residue polypeptide: Oligoribonuclease (181 aa).

An Exonuclease domain is found at 8–171 (LVWLDMEMTG…ADIYESIDEL (164 aa)). The active site involves Tyr-129.

Belongs to the oligoribonuclease family.

The protein localises to the cytoplasm. Its function is as follows. 3'-to-5' exoribonuclease specific for small oligoribonucleotides. The polypeptide is Oligoribonuclease (Bordetella bronchiseptica (strain ATCC BAA-588 / NCTC 13252 / RB50) (Alcaligenes bronchisepticus)).